A 334-amino-acid chain; its full sequence is Protein-methionine-sulfoxide reductase catalytic subunit MsrP (334 aa).

The tat-type signal signal peptide spans 1-44; sequence MKKNQFLKESDVTAESVFFMKRRQVLKALGISAAALSLPHAAHA. Mo-molybdopterin contacts are provided by residues Asn88, 91 to 92, Cys146, Thr181, Asn233, Arg238, and 249 to 251; these read YE and GIK.

Belongs to the MsrP family. In terms of assembly, heterodimer of a catalytic subunit (MsrP) and a heme-binding subunit (MsrQ). The cofactor is Mo-molybdopterin. Post-translationally, predicted to be exported by the Tat system. The position of the signal peptide cleavage has not been experimentally proven.

It is found in the periplasm. The catalysed reaction is L-methionyl-[protein] + a quinone + H2O = L-methionyl-(S)-S-oxide-[protein] + a quinol. It carries out the reaction L-methionyl-[protein] + a quinone + H2O = L-methionyl-(R)-S-oxide-[protein] + a quinol. Functionally, part of the MsrPQ system that repairs oxidized periplasmic proteins containing methionine sulfoxide residues (Met-O), using respiratory chain electrons. Thus protects these proteins from oxidative-stress damage caused by reactive species of oxygen and chlorine generated by the host defense mechanisms. MsrPQ is essential for the maintenance of envelope integrity under bleach stress, rescuing a wide series of structurally unrelated periplasmic proteins from methionine oxidation, including the primary periplasmic chaperone SurA and the lipoprotein Pal. The catalytic subunit MsrP is non-stereospecific, being able to reduce both (R-) and (S-) diastereoisomers of methionine sulfoxide. This Escherichia coli O127:H6 (strain E2348/69 / EPEC) protein is Protein-methionine-sulfoxide reductase catalytic subunit MsrP.